Consider the following 482-residue polypeptide: High affinity 3',5'-cyclic-AMP phosphodiesterase 7A (482 aa).

Serine 84 is subject to Phosphoserine. Residues 136 to 458 (LDDDYNGQAK…ASWKGLQREQ (323 aa)) form the PDEase domain. Residue histidine 212 is the Proton donor of the active site. Residues histidine 216, histidine 252, aspartate 253, and aspartate 362 each contribute to the a divalent metal cation site.

Belongs to the cyclic nucleotide phosphodiesterase family. PDE7 subfamily. As to quaternary structure, interacts with CBFA2T3. The cofactor is a divalent metal cation. In terms of tissue distribution, found at high levels in skeletal muscle and at low levels in a variety of tissues including brain and heart. It is expressed as well in two T-cell lines. Found abundantly in skeletal muscle and at low levels in heart.

The protein resides in the cytoplasm. Its subcellular location is the cytosol. The enzyme catalyses 3',5'-cyclic AMP + H2O = AMP + H(+). It functions in the pathway purine metabolism; 3',5'-cyclic AMP degradation; AMP from 3',5'-cyclic AMP: step 1/1. Its activity is regulated as follows. Insensitive to all selective PDE inhibitors. In terms of biological role, hydrolyzes the second messenger cAMP, which is a key regulator of many important physiological processes. May have a role in muscle signal transduction. The chain is High affinity 3',5'-cyclic-AMP phosphodiesterase 7A from Homo sapiens (Human).